The following is a 116-amino-acid chain: Large ribosomal subunit protein bL17 (116 aa).

The protein belongs to the bacterial ribosomal protein bL17 family. Part of the 50S ribosomal subunit. Contacts protein L32.

This chain is Large ribosomal subunit protein bL17, found in Prochlorococcus marinus (strain MIT 9211).